The following is a 224-amino-acid chain: Ribonuclease T (224 aa).

In terms of domain architecture, Exonuclease spans 20–194; it reads VVIDVETAGF…YDTERTAELF (175 aa). Mg(2+) is bound by residues Asp23, Glu25, His181, and Asp186. Catalysis depends on His181, which acts as the Proton donor/acceptor.

This sequence belongs to the RNase T family. As to quaternary structure, homodimer. Mg(2+) is required as a cofactor.

Trims short 3' overhangs of a variety of RNA species, leaving a one or two nucleotide 3' overhang. Responsible for the end-turnover of tRNA: specifically removes the terminal AMP residue from uncharged tRNA (tRNA-C-C-A). Also appears to be involved in tRNA biosynthesis. This chain is Ribonuclease T, found in Enterobacter sp. (strain 638).